The sequence spans 411 residues: tRNA (guanine(37)-N(1))-methyltransferase (411 aa).

Residues histidine 216, 254 to 255 (DL), 282 to 283 (DG), and asparagine 303 contribute to the S-adenosyl-L-methionine site. Residues 391–411 (ERQASKQDDPKRRKVAAENAA) form a disordered region.

Belongs to the class I-like SAM-binding methyltransferase superfamily. TRM5/TYW2 family. As to quaternary structure, monomer.

The protein localises to the mitochondrion matrix. Its subcellular location is the nucleus. The protein resides in the cytoplasm. It carries out the reaction guanosine(37) in tRNA + S-adenosyl-L-methionine = N(1)-methylguanosine(37) in tRNA + S-adenosyl-L-homocysteine + H(+). In terms of biological role, specifically methylates the N1 position of guanosine-37 in various cytoplasmic and mitochondrial tRNAs. Methylation is not dependent on the nature of the nucleoside 5' of the target nucleoside. This is the first step in the biosynthesis of wybutosine (yW), a modified base adjacent to the anticodon of tRNAs and required for accurate decoding. This is tRNA (guanine(37)-N(1))-methyltransferase from Phytophthora infestans (strain T30-4) (Potato late blight agent).